The following is a 174-amino-acid chain: RNA pyrophosphohydrolase (174 aa).

Residues G6–K149 enclose the Nudix hydrolase domain. The Nudix box signature appears at G38–G59.

The protein belongs to the Nudix hydrolase family. RppH subfamily. The cofactor is a divalent metal cation.

Accelerates the degradation of transcripts by removing pyrophosphate from the 5'-end of triphosphorylated RNA, leading to a more labile monophosphorylated state that can stimulate subsequent ribonuclease cleavage. This Photobacterium profundum (strain SS9) protein is RNA pyrophosphohydrolase.